Here is a 560-residue protein sequence, read N- to C-terminus: Alpha-keto-acid decarboxylase (560 aa).

A thiamine diphosphate-binding site is contributed by Glu-61. The thiamine pyrophosphate binding stretch occupies residues 396–478 (TSFYGMADHR…VVVNNDGYTV (83 aa)). Positions 446, 473, and 475 each coordinate Mg(2+).

It belongs to the TPP enzyme family. A metal cation serves as cofactor. Thiamine diphosphate is required as a cofactor.

Decarboxylates branched-chain and aromatic alpha-keto acids to aldehydes. The polypeptide is Alpha-keto-acid decarboxylase (kdc) (Mycobacterium bovis (strain ATCC BAA-935 / AF2122/97)).